The sequence spans 262 residues: Acyl-coenzyme A diphosphatase FITM2 (262 aa).

The Cytoplasmic portion of the chain corresponds to 1–23 (MEHLERCEWLLRGTLVRAAVRRY). Residues 24–44 (LPWALVASMLAGSLLKELSPL) traverse the membrane as a helical segment. Residues 45–57 (PESYLSNKRNVLN) are Lumenal-facing. Residues 58–78 (VYFVKVAWAWTFCLLLPFIAL) form a helical membrane-spanning segment. The Cytoplasmic segment spans residues 79-93 (TNYHLTGKAGLVLRR). A helical membrane pass occupies residues 94–114 (LSTLLVGTAIWYICTSIFSNI). Over 115-145 (EHYTGSCYQSPALEGVRKEHQSKQQCHQEGG) the chain is Lumenal. Residues 146 to 166 (FWHGFDISGHSFLLTFCALMI) traverse the membrane as a helical segment. H155 is a catalytic residue. The Cytoplasmic segment spans residues 167–190 (VEEMSVLHEVKTDRSHCLHTAITT). Residues 191–211 (LVVALGILTFIWVLMFLCTAV) traverse the membrane as a helical segment. Residues 212-218 (YFHNLSQ) are Lumenal-facing. Residue H214 is part of the active site. The helical transmembrane segment at 219–239 (KVFGTLFGLLSWYGTYGFWYP) threads the bilayer. The Cytoplasmic segment spans residues 240-262 (KAFSPGLPPQSCSLNLKQDSYKK).

The protein belongs to the FIT family. FIT2 subfamily. As to expression, widely expressed.

The protein localises to the endoplasmic reticulum membrane. It catalyses the reaction an acyl-CoA + H2O = an acyl-4'-phosphopantetheine + adenosine 3',5'-bisphosphate + 2 H(+). It carries out the reaction (9Z)-octadecenoyl-CoA + H2O = S-(9Z-octadecenoyl)-4'-phosphopantetheine + adenosine 3',5'-bisphosphate + 2 H(+). The enzyme catalyses (5Z,8Z,11Z,14Z)-eicosatetraenoyl-CoA + H2O = S-(5Z,8Z,11Z,14Z-eicosatetraenoyl)-4'-phosphopantetheine + adenosine 3',5'-bisphosphate + 2 H(+). The catalysed reaction is hexadecanoyl-CoA + H2O = S-hexadecanoyl-4'-phosphopantetheine + adenosine 3',5'-bisphosphate + 2 H(+). Functionally, fatty acyl-coenzyme A (CoA) diphosphatase that hydrolyzes fatty acyl-CoA to yield acyl-4'-phosphopantetheine and adenosine 3',5'-bisphosphate. Preferentially hydrolyzes unsaturated long-chain acyl-CoA substrates such as oleoyl-CoA/(9Z)-octadecenoyl-CoA and arachidonoyl-CoA/(5Z,8Z,11Z,14Z)-eicosatetraenoyl-CoA in the endoplasmic reticulum (ER) lumen. This catalytic activity is required for maintaining ER structure and for lipid droplets (LDs) biogenesis, which are lipid storage organelles involved in maintaining lipid and energy homeostasis. Directly binds to diacylglycerol (DAGs) and triacylglycerol, which is also important for LD biogenesis. May support directional budding of nacent LDs from the ER into the cytosol by reducing DAG levels at sites of LD formation. Plays a role in the regulation of cell morphology and cytoskeletal organization. This chain is Acyl-coenzyme A diphosphatase FITM2, found in Homo sapiens (Human).